A 223-amino-acid chain; its full sequence is Chalcone--flavanone isomerase 2 (223 aa).

3 residues coordinate substrate: Thr41, Asn106, and Ser183.

It belongs to the chalcone isomerase family.

It carries out the reaction a chalcone = a flavanone.. Its pathway is secondary metabolite biosynthesis; flavonoid biosynthesis. In terms of biological role, catalyzes the intramolecular cyclization of bicyclic chalcones into tricyclic (S)-flavanones. Responsible for the isomerization of 4,2',4',6'-tetrahydroxychalcone (also termed chalcone) into naringenin. The chain is Chalcone--flavanone isomerase 2 (CHI2) from Arabidopsis thaliana (Mouse-ear cress).